Here is a 67-residue protein sequence, read N- to C-terminus: Peptide Hp1036 (67 aa).

Residues 1–23 form the signal peptide; the sequence is MKTQFAILLITLVLFQMFSQSDA. Phe36 carries the post-translational modification Phenylalanine amide. The propeptide occupies 40–67; sequence GLNDLSDLDELFDGEISEADVDFLREIM.

This sequence belongs to the non-disulfide-bridged peptide (NDBP) superfamily. Short antimicrobial peptide (group 4) family. As to expression, expressed by the venom gland.

It localises to the secreted. The protein resides in the target cell membrane. Its function is as follows. Amphipathic peptide with antibacterial activities. Shows antiviral activities against the herpes simplex virus type-1. It potently inhibits the initial infection by provoking the rupture of viral envelop and the dissociation of proteins from the virions (EC(50) is 0.43 uM). It also effectively inhibits viral attachment (EC(50) is 2.87 uM), viral entry (EC(50) is 4.29 uM) and viral proliferation after infection (EC(50) is 7.86). Morever, it enters mammalian tested cells (Vero) and reduces the intracellular infectivity. The polypeptide is Peptide Hp1036 (Heterometrus petersii (Asian forest scorpion)).